The chain runs to 105 residues: Nitrogen fixation nifHD region glnB-like protein 1 (105 aa).

The protein belongs to the P(II) protein family.

In terms of biological role, could be involved in the regulation of nitrogen fixation. This is Nitrogen fixation nifHD region glnB-like protein 1 (glnBI) from Methanococcus maripaludis (Methanococcus deltae).